The sequence spans 256 residues: Ribonuclease HII (256 aa).

Positions 73 to 256 (KLIAGIDEAG…RVSFTKNFIV (184 aa)) constitute an RNase H type-2 domain. Positions 79, 80, and 171 each coordinate a divalent metal cation.

It belongs to the RNase HII family. The cofactor is Mn(2+). It depends on Mg(2+) as a cofactor.

The protein resides in the cytoplasm. The catalysed reaction is Endonucleolytic cleavage to 5'-phosphomonoester.. Endonuclease that specifically degrades the RNA of RNA-DNA hybrids. This Acetivibrio thermocellus (strain ATCC 27405 / DSM 1237 / JCM 9322 / NBRC 103400 / NCIMB 10682 / NRRL B-4536 / VPI 7372) (Clostridium thermocellum) protein is Ribonuclease HII.